We begin with the raw amino-acid sequence, 689 residues long: Beta-adrenergic receptor kinase 1 (689 aa).

Positions 1-190 (MADLEAVLAD…ELNIHLTMND (190 aa)) are N-terminal. The RGS domain occupies 54–175 (TFEKIFSQKL…IESDKFTRFC (122 aa)). Residues 191–453 (FSVHRIIGRG…AQEVKESPFF (263 aa)) form the Protein kinase domain. ATP is bound by residues 197–205 (IGRGGFGEV) and Lys220. The Proton acceptor role is filled by Asp317. Residues 454–521 (RSLDWQMVFL…TISERWQQEV (68 aa)) enclose the AGC-kinase C-terminal domain. Positions 558–652 (DCIMHGYMSK…WKKELRDAYR (95 aa)) constitute a PH domain. Ser670 bears the Phosphoserine mark.

It belongs to the protein kinase superfamily. AGC Ser/Thr protein kinase family. GPRK subfamily. In terms of assembly, interacts with the heterodimer formed by GNB1 and GNG2. Interacts with GIT1. Interacts with, and phosphorylates chemokine-stimulated CCR5. Interacts with ARRB1. Interacts with LPAR1 and LPAR2. Interacts with RALA in response to LPAR1 activation. ADRBK1 and RALA mutually inhibit each other's binding to LPAR1. Interacts with ADRB2.

Its subcellular location is the cytoplasm. The protein resides in the cell membrane. It localises to the postsynapse. The protein localises to the presynapse. It catalyses the reaction [beta-adrenergic receptor] + ATP = [beta-adrenergic receptor]-phosphate + ADP + H(+). Its activity is regulated as follows. In contrast to other AGC family kinases, the catalytic activity is solely regulated by the binding of substrates and ligands, not by phosphorylation of the kinase domain. Its function is as follows. Specifically phosphorylates the agonist-occupied form of the beta-adrenergic and closely related receptors, probably inducing a desensitization of them. Key regulator of LPAR1 signaling. Competes with RALA for binding to LPAR1 thus affecting the signaling properties of the receptor. Desensitizes LPAR1 and LPAR2 in a phosphorylation-independent manner. Positively regulates ciliary smoothened (SMO)-dependent Hedgehog (Hh) signaling pathway by facilitating the trafficking of SMO into the cilium and the stimulation of SMO activity. Inhibits relaxation of airway smooth muscle in response to blue light. The chain is Beta-adrenergic receptor kinase 1 from Mesocricetus auratus (Golden hamster).